Here is a 786-residue protein sequence, read N- to C-terminus: Cadherin-9 (786 aa).

The N-terminal stretch at M1–N21 is a signal peptide. The N-linked (GlcNAc...) asparagine glycan is linked to N21. Residues S22 to R52 constitute a propeptide that is removed on maturation. Residues S22 to A614 lie on the Extracellular side of the membrane. 5 Cadherin domains span residues W54–F158, T159–F267, P268–F382, S383–F487, and F487–L604. N254 is a glycosylation site (N-linked (GlcNAc...) asparagine). 2 N-linked (GlcNAc...) asparagine glycosylation sites follow: N454 and N535. A helical membrane pass occupies residues L615–L635. Over K636 to D786 the chain is Cytoplasmic. S785 is modified (phosphoserine).

It is found in the cell membrane. Functionally, cadherins are calcium-dependent cell adhesion proteins. They preferentially interact with themselves in a homophilic manner in connecting cells; cadherins may thus contribute to the sorting of heterogeneous cell types. The polypeptide is Cadherin-9 (Cdh9) (Mus musculus (Mouse)).